We begin with the raw amino-acid sequence, 553 residues long: Putative transport protein YidE (553 aa).

5 helical membrane-spanning segments follow: residues 4 to 24, 28 to 48, 65 to 85, 95 to 115, and 158 to 178; these read IALT…IGNV, GIGL…HFVS, FGLI…FFAS, LFAV…HKLF, and MSYA…MWML. 2 consecutive RCK C-terminal domains span residues 191–276 and 279–361; these read QQHE…VIGQ and DTSL…VLGN. The next 6 helical transmembrane spans lie at 371–391, 393–413, 439–459, 464–484, 493–513, and 533–553; these read MLPV…PVFV, GFPA…ALIL, IVLF…NTLV, LSWI…VGIL, YLTM…LAFA, and LVMF…WSIG.

Belongs to the AAE transporter (TC 2.A.81) family. YidE subfamily.

It localises to the cell membrane. In Shigella boydii serotype 18 (strain CDC 3083-94 / BS512), this protein is Putative transport protein YidE.